We begin with the raw amino-acid sequence, 226 residues long: Glutathione peroxidase 3 (226 aa).

A signal peptide spans 1 to 24 (MARLLQASCLLSLLLAGFVPQSRG). U73 is a catalytic residue. U73 is a non-standard amino acid (selenocysteine).

Belongs to the glutathione peroxidase family. As to quaternary structure, homotetramer. Secreted in plasma.

The protein resides in the secreted. It carries out the reaction 2 glutathione + H2O2 = glutathione disulfide + 2 H2O. The catalysed reaction is tert-butyl hydroperoxide + 2 glutathione = tert-butanol + glutathione disulfide + H2O. In terms of biological role, protects cells and enzymes from oxidative damage, by catalyzing the reduction of hydrogen peroxide, lipid peroxides and organic hydroperoxide, by glutathione. This chain is Glutathione peroxidase 3, found in Pongo pygmaeus (Bornean orangutan).